An 823-amino-acid polypeptide reads, in one-letter code: Apoptosis-resistant E3 ubiquitin protein ligase 1 (823 aa).

One copy of the Filamin repeat lies at 52 to 158 (GNYLDPRSCK…VAYSPYYKIF (107 aa)). The disordered stretch occupies residues 315 to 345 (PPMHMTSSQRRPSTAVDEEDEDSPSECHTPE). An interaction with SOCS2 region spans residues 483 to 789 (SISDWSKNFE…THSTLPTAHT (307 aa)). Positions 483–823 (SISDWSKNFE…SEGCEGFGML (341 aa)) constitute an HECT domain. Catalysis depends on cysteine 790, which acts as the Glycyl thioester intermediate.

In terms of assembly, interacts with SOCS2. Interacts (via HECT domain) with HTRA2, DIABLO/SMAC and SEPTIN4; in the cytoplasm following induction of apoptosis. In terms of processing, autoubiquitinated in vitro in the presence of E2 enzyme UBE2D1/UBCH5A.

It catalyses the reaction S-ubiquitinyl-[E2 ubiquitin-conjugating enzyme]-L-cysteine + [acceptor protein]-L-lysine = [E2 ubiquitin-conjugating enzyme]-L-cysteine + N(6)-ubiquitinyl-[acceptor protein]-L-lysine.. It participates in protein modification; protein ubiquitination. Its function is as follows. E3 ubiquitin-protein ligase that catalyzes 'Lys-11'- or 'Lys-33'-linked polyubiquitin chains, with some preference for 'Lys-33' linkages. E3 ubiquitin-protein ligases accept ubiquitin from an E2 ubiquitin-conjugating enzyme in the form of a thioester and then directly transfers the ubiquitin to targeted substrates. Ubiquitinates SEPTIN4, DIABLO/SMAC and HTRA2 in vitro. Modulates pulmonary inflammation by targeting SOCS2 for ubiquitination and subsequent degradation by the proteasome. The polypeptide is Apoptosis-resistant E3 ubiquitin protein ligase 1 (Homo sapiens (Human)).